A 509-amino-acid polypeptide reads, in one-letter code: Bifunctional purine biosynthesis protein PurH (509 aa).

An MGS-like domain is found at 1 to 144 (MKRALISVSD…KNYAAVTVVV (144 aa)).

The protein belongs to the PurH family.

It carries out the reaction (6R)-10-formyltetrahydrofolate + 5-amino-1-(5-phospho-beta-D-ribosyl)imidazole-4-carboxamide = 5-formamido-1-(5-phospho-D-ribosyl)imidazole-4-carboxamide + (6S)-5,6,7,8-tetrahydrofolate. The catalysed reaction is IMP + H2O = 5-formamido-1-(5-phospho-D-ribosyl)imidazole-4-carboxamide. The protein operates within purine metabolism; IMP biosynthesis via de novo pathway; 5-formamido-1-(5-phospho-D-ribosyl)imidazole-4-carboxamide from 5-amino-1-(5-phospho-D-ribosyl)imidazole-4-carboxamide (10-formyl THF route): step 1/1. Its pathway is purine metabolism; IMP biosynthesis via de novo pathway; IMP from 5-formamido-1-(5-phospho-D-ribosyl)imidazole-4-carboxamide: step 1/1. The chain is Bifunctional purine biosynthesis protein PurH from Listeria monocytogenes serovar 1/2a (strain ATCC BAA-679 / EGD-e).